Here is a 500-residue protein sequence, read N- to C-terminus: Probable cytosol aminopeptidase (500 aa).

2 residues coordinate Mn(2+): Lys-265 and Asp-270. The active site involves Lys-277. The Mn(2+) site is built by Asp-288, Asp-347, and Glu-349. Arg-351 is an active-site residue.

The protein belongs to the peptidase M17 family. Mn(2+) serves as cofactor.

The protein resides in the cytoplasm. The catalysed reaction is Release of an N-terminal amino acid, Xaa-|-Yaa-, in which Xaa is preferably Leu, but may be other amino acids including Pro although not Arg or Lys, and Yaa may be Pro. Amino acid amides and methyl esters are also readily hydrolyzed, but rates on arylamides are exceedingly low.. The enzyme catalyses Release of an N-terminal amino acid, preferentially leucine, but not glutamic or aspartic acids.. Functionally, presumably involved in the processing and regular turnover of intracellular proteins. Catalyzes the removal of unsubstituted N-terminal amino acids from various peptides. The polypeptide is Probable cytosol aminopeptidase (Rickettsia africae (strain ESF-5)).